The chain runs to 154 residues: Myoglobin (154 aa).

The region spanning 2–148 is the Globin domain; it reads VLSDAEWQLV…FRKDIAAKYK (147 aa). S4 is modified (phosphoserine). Residue H65 coordinates nitrite. H65 lines the O2 pocket. T68 is modified (phosphothreonine). A heme b-binding site is contributed by H94.

This sequence belongs to the globin family. As to quaternary structure, monomeric.

The protein resides in the cytoplasm. It is found in the sarcoplasm. It catalyses the reaction Fe(III)-heme b-[protein] + nitric oxide + H2O = Fe(II)-heme b-[protein] + nitrite + 2 H(+). The catalysed reaction is H2O2 + AH2 = A + 2 H2O. Its function is as follows. Monomeric heme protein which primary function is to store oxygen and facilitate its diffusion within muscle tissues. Reversibly binds oxygen through a pentacoordinated heme iron and enables its timely and efficient release as needed during periods of heightened demand. Depending on the oxidative conditions of tissues and cells, and in addition to its ability to bind oxygen, it also has a nitrite reductase activity whereby it regulates the production of bioactive nitric oxide. Under stress conditions, like hypoxia and anoxia, it also protects cells against reactive oxygen species thanks to its pseudoperoxidase activity. This chain is Myoglobin (MB), found in Eschrichtius robustus (California gray whale).